The chain runs to 220 residues: Ribose-5-phosphate isomerase A (220 aa).

Substrate-binding positions include 28 to 31, 81 to 84, and 94 to 97; these read TGST, DGAD, and KGGG. The Proton acceptor role is filled by Glu103. Lys121 provides a ligand contact to substrate.

Belongs to the ribose 5-phosphate isomerase family. Homodimer.

It carries out the reaction aldehydo-D-ribose 5-phosphate = D-ribulose 5-phosphate. It functions in the pathway carbohydrate degradation; pentose phosphate pathway; D-ribose 5-phosphate from D-ribulose 5-phosphate (non-oxidative stage): step 1/1. Catalyzes the reversible conversion of ribose-5-phosphate to ribulose 5-phosphate. This is Ribose-5-phosphate isomerase A from Aromatoleum aromaticum (strain DSM 19018 / LMG 30748 / EbN1) (Azoarcus sp. (strain EbN1)).